A 78-amino-acid chain; its full sequence is Small ribosomal subunit protein bS18 (78 aa).

It belongs to the bacterial ribosomal protein bS18 family. In terms of assembly, part of the 30S ribosomal subunit. Forms a tight heterodimer with protein bS6.

Its function is as follows. Binds as a heterodimer with protein bS6 to the central domain of the 16S rRNA, where it helps stabilize the platform of the 30S subunit. The protein is Small ribosomal subunit protein bS18 of Rhodospirillum rubrum (strain ATCC 11170 / ATH 1.1.1 / DSM 467 / LMG 4362 / NCIMB 8255 / S1).